The chain runs to 285 residues: Probable endonuclease 4 (285 aa).

Residues His-69, His-109, Glu-145, Asp-179, His-182, His-216, Asp-229, His-231, and Glu-261 each contribute to the Zn(2+) site.

Belongs to the AP endonuclease 2 family. Zn(2+) serves as cofactor.

It carries out the reaction Endonucleolytic cleavage to 5'-phosphooligonucleotide end-products.. Endonuclease IV plays a role in DNA repair. It cleaves phosphodiester bonds at apurinic or apyrimidinic (AP) sites, generating a 3'-hydroxyl group and a 5'-terminal sugar phosphate. This is Probable endonuclease 4 from Salmonella paratyphi A (strain AKU_12601).